The primary structure comprises 393 residues: Methylthioribose kinase (393 aa).

Residues N38, K53, and 107–109 contribute to the ATP site; that span reads EDL. D225 contributes to the substrate binding site. Residue 242 to 244 participates in ATP binding; sequence DPE. R332 contacts substrate.

It belongs to the methylthioribose kinase family. Homodimer.

It carries out the reaction 5-(methylsulfanyl)-D-ribose + ATP = 5-(methylsulfanyl)-alpha-D-ribose 1-phosphate + ADP + H(+). The protein operates within amino-acid biosynthesis; L-methionine biosynthesis via salvage pathway; S-methyl-5-thio-alpha-D-ribose 1-phosphate from S-methyl-5'-thioadenosine (hydrolase route): step 2/2. Its function is as follows. Catalyzes the phosphorylation of methylthioribose into methylthioribose-1-phosphate. The polypeptide is Methylthioribose kinase (Bacillus cereus (strain AH187)).